Reading from the N-terminus, the 261-residue chain is Calbindin (261 aa).

Alanine 2 carries the N-acetylalanine modification. Positions 2-7 (AESHLQ) are interaction with RANBP9. 5 EF-hand domains span residues 11–46 (ITAS…LLQA), 53–88 (ELSP…EENF), 98–133 (KSCE…LLEK), 142–177 (KLAE…QENF), and 186–221 (MCGK…LCEK). The Ca(2+) site is built by aspartate 24, aspartate 26, serine 28, tyrosine 30, and glutamate 35. Positions 111, 113, 115, 122, 155, 157, 159, 161, 166, 199, 201, 203, 205, and 210 each coordinate Ca(2+).

The protein belongs to the calbindin family. In terms of assembly, interacts with RANBP9.

In terms of biological role, buffers cytosolic calcium. May stimulate a membrane Ca(2+)-ATPase and a 3',5'-cyclic nucleotide phosphodiesterase. The polypeptide is Calbindin (Calb1) (Rattus norvegicus (Rat)).